The sequence spans 313 residues: Carbamate kinase 2 (313 aa).

This sequence belongs to the carbamate kinase family.

It is found in the cytoplasm. The catalysed reaction is hydrogencarbonate + NH4(+) + ATP = carbamoyl phosphate + ADP + H2O + H(+). It functions in the pathway metabolic intermediate metabolism; carbamoyl phosphate degradation; CO(2) and NH(3) from carbamoyl phosphate: step 1/1. This Staphylococcus aureus (strain Mu50 / ATCC 700699) protein is Carbamate kinase 2 (arcC2).